The chain runs to 1842 residues: Fatty acid synthase alpha subunit pigJ (1842 aa).

The interval 120–184 (GAPVEEEGSK…TPAGGSTTPD (65 aa)) is disordered. Over residues 140–175 (SGSSRTATTAKATVTTPSSSSPETAPPAASTPSQGT) the composition is skewed to low complexity. The Carrier domain maps to 184–262 (DIPLSAKHVV…DALQGNFPGK (79 aa)). Residue Ser222 is modified to O-(pantetheine 4'-phosphoryl)serine. Residues 611-807 (GKTVLVTGAG…CGAAIGWVRG (197 aa)) form a beta-ketoacyl reductase region. The Ketosynthase family 3 (KS3) domain occupies 1058 to 1585 (KEFLQEIVVE…QKGGIAVVVA (528 aa)). Residues Cys1244, His1470, and His1511 each act as for beta-ketoacyl synthase activity in the active site. A disordered region spans residues 1649 to 1672 (KARVGGHPENNNNNNNNSSSKRNT). Low complexity predominate over residues 1658-1668 (NNNNNNNNSSS). Residues Asp1725, Val1726, and Glu1727 each coordinate Mg(2+). Acetyl-CoA-binding positions include 1725–1727 (DVE), Ser1761, 1770–1780 (EAVFKSLQTPS), and 1823–1825 (ITH). Positions 1824 and 1825 each coordinate Mg(2+).

This sequence belongs to the thiolase-like superfamily. Fungal fatty acid synthetase subunit alpha family. [Alpha(6)beta(6)] hexamers of two multifunctional subunits (alpha and beta).

The enzyme catalyses acetyl-CoA + n malonyl-CoA + 2n NADPH + 4n H(+) = a long-chain-acyl-CoA + n CoA + n CO2 + 2n NADP(+).. It carries out the reaction a fatty acyl-[ACP] + malonyl-[ACP] + H(+) = a 3-oxoacyl-[ACP] + holo-[ACP] + CO2. The catalysed reaction is a (3R)-hydroxyacyl-[ACP] + NADP(+) = a 3-oxoacyl-[ACP] + NADPH + H(+). It functions in the pathway secondary metabolite biosynthesis. Functionally, fatty acid synthase alpha subunit; part of the gene cluster that mediates the biosynthesis of azaphilone pigments (MonAzPs), a complex mixture of compounds with a common azaphilone skeleton very widely used as food colorants. PigJ and pigK form the two subunits of a dedicated fungal fatty acid synthase (FAS) that produces the side chain fatty acyl moiety of MonAzPs, a beta-keto fatty acid. The chain length control of the pigJ-pigK FAS is somewhat flexible as MonAzPs features either a beta-ketooctanoic or a beta-ketodecanoic acid moiety. The beta-ketoacyl-ACP probably serves as the substrate for the acetyltransferase pigD that directly transfers the fatty acyl chain to the C-4 alcohol of the pyran ring. The first step of the pathway is performed by the nrPKS pigA that forms the hexaketide precursor from successive condensations of five malonyl-CoA units, with a simple acetyl-CoA starter unit. The role of esterase pigG is not clear, but it may play at most a supplementary role in the formation of the benzaldehyde produced by the pigA nrPKS. This very reactive benzaldehyde is intercepted by the pigC ketoreductase that to provide the first stable enzyme-free MonAzPs intermediate, 6-(4-hydroxy-2-oxopentyl)-3-methyl-2,4-dioxocyclohexane carbaldehyde, also known as M7PKS-1. The FAD-dependent monooxygenase pigN hydroxylates M7PKS-1 at C-4, which triggers the formation of the pyran ring. PigJ, pigK and pigD are involved in the acetylation of the pyran ring. PigJ and pigK form the two subunits of a dedicated fungal FAS that produces the side chain fatty acyl moiety of MonAzPs and pigD transfers the fatty acyl chain to the C-4 alcohol. PigM and pigO are involved in the elimination of the omega-1 alcohol. PigM acts as an O-acetyltransferase that synthesizes the putative O-11 acetyl intermediate whereas pigO eliminates acetic acid to yield an intermediate with a C10(11) double bond. The dehydration of the C-11 alcohol followed by the reduction of the C6(7) double bond by the NAD(P)H-dependent oxidoreductase pigE increases the electrophilicity of the C-5 ketone of the resulting acyl benzopyran. This in turn sets up the C-5 ketone for an intramolecular Knoevenagel aldol condensation with the C-20 enol of the side chain. This condensation affords the characteristic linear tricyclic carbon skeletons of the yellow pigments that serve as the common precursors for the classical yellow pigments monascin and ankaflavin, orange pigments rubopunctatin and monascorubrin, and red pigments ribropunctamine and monascorubramine. The FAD-dependent oxidoreductase pigF is especially invoved in the biosynthesis of orange and red pigments via desaturation of C6(7). This chain is Fatty acid synthase alpha subunit pigJ, found in Monascus ruber (Mold).